The sequence spans 190 residues: Protein LZIC (190 aa).

Residues 2-63 (ASRGKTETSK…SEFNDSLKKI (62 aa)) are a coiled coil.

The protein belongs to the CTNNBIP1 family. In terms of assembly, does not interact with CTNNB1.

This Rattus norvegicus (Rat) protein is Protein LZIC (Lzic).